We begin with the raw amino-acid sequence, 309 residues long: uncharacterized protein (309 aa).

Residues 1 to 11 show a composition bias toward basic residues; that stretch reads MPGNSRRRGAV. Residues 1-69 form a disordered region; that stretch reads MPGNSRRRGA…PVKRTDETET (69 aa). Residues Gly261, Ile281, and Leu290 each coordinate S-adenosyl-L-methionine.

Belongs to the class IV-like SAM-binding methyltransferase superfamily. RNA methyltransferase TrmH family.

This is an uncharacterized protein from Mycobacterium leprae (strain TN).